The following is a 24-amino-acid chain: Humanin-like 7 (24 aa).

This sequence belongs to the humanin family. Expressed in testis.

Its subcellular location is the secreted. The protein resides in the cytoplasm. Plays a role as a neuroprotective and antiapoptotic factor. The protein is Humanin-like 7 of Homo sapiens (Human).